Here is a 37-residue protein sequence, read N- to C-terminus: Large ribosomal subunit protein bL36 (37 aa).

Positions 11, 14, 27, and 32 each coordinate Zn(2+).

Belongs to the bacterial ribosomal protein bL36 family. As to quaternary structure, part of the 50S ribosomal subunit. It depends on Zn(2+) as a cofactor.

In terms of biological role, binds the 23S rRNA. In Deinococcus radiodurans (strain ATCC 13939 / DSM 20539 / JCM 16871 / CCUG 27074 / LMG 4051 / NBRC 15346 / NCIMB 9279 / VKM B-1422 / R1), this protein is Large ribosomal subunit protein bL36 (rpmJ).